The sequence spans 230 residues: Large ribosomal subunit protein uL1 (230 aa).

The protein belongs to the universal ribosomal protein uL1 family. As to quaternary structure, part of the 50S ribosomal subunit.

In terms of biological role, binds directly to 23S rRNA. The L1 stalk is quite mobile in the ribosome, and is involved in E site tRNA release. Protein L1 is also a translational repressor protein, it controls the translation of the L11 operon by binding to its mRNA. The polypeptide is Large ribosomal subunit protein uL1 (Oenococcus oeni (strain ATCC BAA-331 / PSU-1)).